The sequence spans 134 residues: Arginine decarboxylase proenzyme (134 aa).

The Schiff-base intermediate with substrate; via pyruvic acid role is filled by Ser-82. At Ser-82 the chain carries Pyruvic acid (Ser); by autocatalysis. The Proton acceptor; for processing activity role is filled by His-87. Cys-102 (proton donor; for catalytic activity) is an active-site residue.

It belongs to the prokaryotic AdoMetDC family. Type 1 subfamily. In terms of assembly, heterooctamer of four alpha and four beta chains arranged as a tetramer of alpha/beta heterodimers. Requires pyruvate as cofactor. Post-translationally, is synthesized initially as an inactive proenzyme. Formation of the active enzyme involves a self-maturation process in which the active site pyruvoyl group is generated from an internal serine residue via an autocatalytic post-translational modification. Two non-identical subunits are generated from the proenzyme in this reaction, and the pyruvate is formed at the N-terminus of the alpha chain, which is derived from the carboxyl end of the proenzyme. The post-translation cleavage follows an unusual pathway, termed non-hydrolytic serinolysis, in which the side chain hydroxyl group of the serine supplies its oxygen atom to form the C-terminus of the beta chain, while the remainder of the serine residue undergoes an oxidative deamination to produce ammonia and the pyruvoyl group blocking the N-terminus of the alpha chain.

The catalysed reaction is L-arginine + H(+) = agmatine + CO2. It participates in amine and polyamine biosynthesis; agmatine biosynthesis; agmatine from L-arginine: step 1/1. Specifically catalyzes the decarboxylation of L-arginine to agmatine. Has no S-adenosylmethionine decarboxylase (AdoMetDC) activity. This is Arginine decarboxylase proenzyme from Caldivirga maquilingensis (strain ATCC 700844 / DSM 13496 / JCM 10307 / IC-167).